Consider the following 265-residue polypeptide: Glutamate racemase (265 aa).

Substrate-binding positions include 13-14 (DS) and 45-46 (YG). Cys-77 (proton donor/acceptor) is an active-site residue. 78–79 (NT) lines the substrate pocket. Cys-185 acts as the Proton donor/acceptor in catalysis. 186–187 (TH) contacts substrate.

Belongs to the aspartate/glutamate racemases family.

It carries out the reaction L-glutamate = D-glutamate. It participates in cell wall biogenesis; peptidoglycan biosynthesis. Its function is as follows. Provides the (R)-glutamate required for cell wall biosynthesis. The protein is Glutamate racemase of Vibrio cholerae serotype O1 (strain ATCC 39315 / El Tor Inaba N16961).